A 501-amino-acid chain; its full sequence is Protein anon-37Cs (501 aa).

Its subcellular location is the cytoplasm. Functionally, has a non-vital function. The chain is Protein anon-37Cs (anon-37Cs) from Drosophila simulans (Fruit fly).